A 639-amino-acid polypeptide reads, in one-letter code: tRNA-dihydrouridine(47) synthase [NAD(P)(+)]-like (639 aa).

2 stretches are compositionally biased toward polar residues: residues 1–19 (MAES…TVTQ) and 54–65 (QTCSELSGNDAE). Disordered stretches follow at residues 1 to 20 (MAES…VTQK) and 52 to 122 (DKQT…HSQF). The segment covering 66-85 (NTVRAEDAAEPEAKRIKLDD) has biased composition (basic and acidic residues). A compositionally biased stretch (basic residues) spans 103–119 (EKKRARGQNKSRPHMKH). 2 C3H1-type zinc fingers span residues 122–152 (FEEN…HDVA) and 160–190 (EDIR…HLGD). FMN is bound by residues 300–302 (PLT) and glutamine 354. Cysteine 385 serves as the catalytic Proton donor. FMN-binding positions include lysine 424, histidine 454, 486–488 (NGD), and 509–510 (AR).

Belongs to the Dus family. Dus3 subfamily. The cofactor is FMN.

The enzyme catalyses 5,6-dihydrouridine(47) in tRNA + NAD(+) = uridine(47) in tRNA + NADH + H(+). It catalyses the reaction 5,6-dihydrouridine(47) in tRNA + NADP(+) = uridine(47) in tRNA + NADPH + H(+). The catalysed reaction is a 5,6-dihydrouridine in mRNA + NAD(+) = a uridine in mRNA + NADH + H(+). It carries out the reaction a 5,6-dihydrouridine in mRNA + NADP(+) = a uridine in mRNA + NADPH + H(+). Functionally, catalyzes the synthesis of dihydrouridine, a modified base, in various RNAs, such as tRNAs, mRNAs and some long non-coding RNAs (lncRNAs). Mainly modifies the uridine in position 47 (U47) in the D-loop of most cytoplasmic tRNAs. Also able to mediate the formation of dihydrouridine in some mRNAs, thereby regulating their translation. This is tRNA-dihydrouridine(47) synthase [NAD(P)(+)]-like (dus3l) from Xenopus tropicalis (Western clawed frog).